The chain runs to 84 residues: Toxin BmKaTx16 (84 aa).

An N-terminal signal peptide occupies residues 1–19; it reads MNYLVMISFALLLMTGVES. The 63-residue stretch at 21–83 folds into the LCN-type CS-alpha/beta domain; it reads RDAYIAKPHN…VPIRVPGKCH (63 aa). Intrachain disulfides connect cysteine 31/cysteine 82, cysteine 35/cysteine 55, cysteine 41/cysteine 65, and cysteine 45/cysteine 67. Arginine 84 is a propeptide (removed by a carboxypeptidase).

This sequence belongs to the long (4 C-C) scorpion toxin superfamily. Sodium channel inhibitor family. Alpha subfamily. Expressed by the venom gland.

The protein localises to the secreted. Functionally, alpha toxins bind voltage-independently at site-3 of sodium channels (Nav) and inhibit the inactivation of the activated channels, thereby blocking neuronal transmission. In Olivierus martensii (Manchurian scorpion), this protein is Toxin BmKaTx16.